Here is a 149-residue protein sequence, read N- to C-terminus: Transcriptional repressor NrdR (149 aa).

A zinc finger spans residues 3–34 (CPFCAAEETKVVDSRLAADGYQIRRRRECTSC). In terms of domain architecture, ATP-cone spans 49–139 (PYVIKNNGNR…VYLSFDDIEE (91 aa)).

It belongs to the NrdR family. Requires Zn(2+) as cofactor.

Negatively regulates transcription of bacterial ribonucleotide reductase nrd genes and operons by binding to NrdR-boxes. The polypeptide is Transcriptional repressor NrdR (Actinobacillus pleuropneumoniae serotype 5b (strain L20)).